The primary structure comprises 247 residues: 14-3-3 protein gamma (247 aa).

N-acetylmethionine; in 14-3-3 protein gamma; alternate; partial is present on M1. An N-acetylvaline; in 14-3-3 protein gamma, N-terminally processed; partial modification is found at V2. Residue V2 is modified to N-acetylvaline; partial. The segment at V2–Q166 is required for interaction with SPATA18/MIEAP (isoform 2) but dispensable for binding to SPATA18/MIEAP (isoform 1). Positions V2–N247 are interaction with SPATA18/MIEAP. A Phosphoserine modification is found at S71. Residue Y133 is modified to Phosphotyrosine. T145 is modified (phosphothreonine). A Phosphoserine modification is found at S215. Residue T234 is modified to Phosphothreonine. A Phosphoserine modification is found at S235.

It belongs to the 14-3-3 family. As to quaternary structure, homodimer. Part of a complex that contains DSG3, PKP1, YAP1 and YWHAG; the complex is required for localization of DSG3 and YAP1 to the cell membrane in keratinocytes. Interacts with SAMSN1. Interacts with RAF1, SSH1 and CRTC2/TORC2. Interacts with ABL1 (phosphorylated form); the interaction retains it in the cytoplasm. Interacts with GAB2. Interacts with MDM4 (phosphorylated); negatively regulates MDM4 activity toward TP53. Interacts with PKA-phosphorylated AANAT and SIRT2. Interacts with the 'Thr-369' phosphorylated form of DAPK2. Interacts with PI4KB, TBC1D22A and TBC1D22B. Interacts with SLITRK1. Interacts with LRRK2; this interaction is dependent on LRRK2 phosphorylation. Interacts with MARK2 and MARK3. Interacts with MEFV. Interacts with ENDOG, TSC2 and PIK3C3; interaction with ENDOG weakens its interaction with TSC2 and PIK3C3. Interacts with (phosphorylated) WDR24. Interacts with BEST1; this interaction promotes L-glutamate channel activity leading to the positive regulation of NMDA glutamate receptor activity through the L-glutamate secretion. Interacts with PKP1 (when phosphorylated); the interaction results in translocation of PKP1 to the cytoplasm and loss of intercellular adhesion in keratinocytes. Interacts with SPATA18/MIEAP (isoforms 1 and 2); a protein that also plays a role in MALM. Post-translationally, phosphorylated by various PKC isozymes. In terms of tissue distribution, highly expressed in brain, skeletal muscle, and heart.

It is found in the cytoplasm. Its subcellular location is the cytosol. The protein resides in the mitochondrion matrix. In terms of biological role, adapter protein implicated in the regulation of a large spectrum of both general and specialized signaling pathways. Binds to a large number of partners, usually by recognition of a phosphoserine or phosphothreonine motif. Binding generally results in the modulation of the activity of the binding partner. Promotes inactivation of WDR24 component of the GATOR2 complex by binding to phosphorylated WDR24. Participates in the positive regulation of NMDA glutamate receptor activity by promoting the L-glutamate secretion through interaction with BEST1. Reduces keratinocyte intercellular adhesion, via interacting with PKP1 and sequestering it in the cytoplasm, thereby reducing its incorporation into desmosomes. Plays a role in mitochondrial protein catabolic process (also named MALM) that promotes the degradation of damaged proteins inside mitochondria. The protein is 14-3-3 protein gamma of Homo sapiens (Human).